The chain runs to 306 residues: MADLRDEKGNPIQLTDQHGNPVQLTDEYGNPVHITGVATTGATTGHHDHGVGGASHGGVGSTGLGGVAGAAGLAGATAAAATHGGSHGGTGTHGVGPTGVGAAHGGTGTTTGLGTGTGTTGQTHGMGPTGIGGTHGVGSTGIGGAHGGTGVLGQTHGMGPTGTGAAHGGLGTGQSGLGSSYATHGGLGTGIGTGSAPASAGSHSHAPEKKTALGEQLHRSNSSSSSSEDDGQGGRRKKGFTTKIKEKLGGGKHKKDEHTTVATTKTTTAAHPGGAAVAVEHHEHEKKSMLDKIKDKLPGHHSPTSH.

Disordered stretches follow at residues 1–57, 80–171, and 188–306; these read MADL…ASHG, AATH…GGLG, and GTGI…PTSH. Over residues 12 to 23 the composition is skewed to polar residues; sequence IQLTDQHGNPVQ. Low complexity predominate over residues 32-44; that stretch reads VHITGVATTGATT. Composition is skewed to gly residues over residues 85–119, 127–151, and 159–171; these read GSHG…GTGT, GPTG…GTGV, and GPTG…GGLG. Residues 194-204 show a composition bias toward low complexity; it reads GSAPASAGSHS. Composition is skewed to basic and acidic residues over residues 205 to 218 and 243 to 259; these read HAPE…EQLH and KIKE…DEHT. The segment covering 260 to 278 has biased composition (low complexity); that stretch reads TVATTKTTTAAHPGGAAVA. Over residues 279–298 the composition is skewed to basic and acidic residues; it reads VEHHEHEKKSMLDKIKDKLP.

This sequence belongs to the plant dehydrin family.

The polypeptide is Embryogenic cell protein 40 (ECP40) (Daucus carota (Wild carrot)).